Reading from the N-terminus, the 583-residue chain is MMSRLNSVVIKLWLTIILIVTTVLILLSIALITFMQYYFTQETENAIREDARRISSLVEQSHNKEEAIKYSQTLIENPGGLMIINNKHRQSTASLSNIKKQMLNEVVNNDHFDDVFDKGKSVTRNVTIKEKGSSQTYILLGYPTKAQKNSHSKYSGVFIYKDLKSIEDTNNAITIITIITAVIFLTITTVFAFFLSSRITKPLRRLRDQATRVSEGDYSYKPSVTTKDEIGQLSQAFNQMSTEIEEHVDALSTSKNIRDSLINSMVEGVLGINESRQIILSNKMANDIMDNIDEDAKAFLLRQIEDTFKSKQTEMRDLEMNTRFFVVTTSYIDKIEQGGKSGVVVTVRDMTNEHNLDQMKKDFIANVSHELRTPISLLQGYTESIVDGIVTEPDEIKESLAIVLDESKRLNRLVNELLNVARMDAEGLSVNKEVQPIAALLDKMKIKYRQQADDLGLNMTFNYCKKRVWTYDMDRMDQVLTNLIDNASRYTKPGDEIAITCDENESEDILYIKDTGTGIAPEHLQQVFDRFYKVDAARTRGKQGTGLGLFICKMIIEEHGGSIDVKSELGKGTTFIIKLPKPE.

At 1–11 the chain is on the cytoplasmic side; sequence MMSRLNSVVIK. Residues 12-32 form a helical membrane-spanning segment; the sequence is LWLTIILIVTTVLILLSIALI. The Extracellular segment spans residues 33 to 174; the sequence is TFMQYYFTQE…SIEDTNNAIT (142 aa). Residues 175 to 195 traverse the membrane as a helical segment; the sequence is IITIITAVIFLTITTVFAFFL. At 196–583 the chain is on the cytoplasmic side; that stretch reads SSRITKPLRR…TFIIKLPKPE (388 aa). The HAMP domain occupies 197-249; it reads SRITKPLRRLRDQATRVSEGDYSYKPSVTTKDEIGQLSQAFNQMSTEIEEHVD. In terms of domain architecture, Histidine kinase spans 366-583; sequence NVSHELRTPI…TFIIKLPKPE (218 aa). At H369 the chain carries Phosphohistidine; by autocatalysis.

The protein localises to the cell membrane. The enzyme catalyses ATP + protein L-histidine = ADP + protein N-phospho-L-histidine.. Member of the two-component regulatory system SrrA/SrrB, which is involved in the global regulation of staphylococcal virulence factors in response to environmental oxygen levels as well as biofilm formation. Also plays an essential role in host-derived nitric oxide resistance by regulating hmp/flavohemoglobin, an enzyme that detoxifies nitric oxide by converting it to nitrate. Functions as a sensor protein kinase which is autophosphorylated at a histidine residue and transfers its phosphate group to SrrA. In turn, SrrA binds to the upstream promoter regions of the target genes to positively and negatively regulate their expression. This chain is Sensor protein SrrB (srrB), found in Staphylococcus aureus (strain MRSA252).